A 138-amino-acid chain; its full sequence is Basic phospholipase A2 homolog Tbo-K49 (138 aa).

A signal peptide spans 1–16 (MRTLWIMAVLLVGVEG). Intrachain disulfides connect Cys-42–Cys-131, Cys-44–Cys-60, Cys-59–Cys-111, Cys-65–Cys-138, Cys-66–Cys-104, and Cys-91–Cys-102. The interval 121–133 (KKERINTKIFCKK) is important for membrane-damaging activities in eukaryotes and bacteria; heparin-binding.

In terms of assembly, monomer. In terms of tissue distribution, expressed by the venom gland.

Its subcellular location is the secreted. Snake venom phospholipase A2 homolog that lacks catalytic activity. It induces local edema. Is myotoxic. A model of myotoxic mechanism has been proposed: an apo Lys49-PLA2 is activated by the entrance of a hydrophobic molecule (e.g. fatty acid) at the hydrophobic channel of the protein leading to a reorientation of a monomer. This reorientation causes a transition between 'inactive' to 'active' states, causing alignment of C-terminal and membrane-docking sites (MDoS) side-by-side and putting the membrane-disruption sites (MDiS) in the same plane, exposed to solvent and in a symmetric position for both monomers. The MDoS region stabilizes the toxin on membrane by the interaction of charged residues with phospholipid head groups. Subsequently, the MDiS region destabilizes the membrane with penetration of hydrophobic residues. This insertion causes a disorganization of the membrane, allowing an uncontrolled influx of ions (i.e. calcium and sodium), and eventually triggering irreversible intracellular alterations and cell death. This chain is Basic phospholipase A2 homolog Tbo-K49, found in Craspedocephalus borneensis (Borneo pit viper).